Reading from the N-terminus, the 816-residue chain is H(+)/Cl(-) exchange transporter 5 (816 aa).

Residues 1 to 124 (MAMWQGAMDN…WALIHSVSDA (124 aa)) lie on the Cytoplasmic side of the membrane. 2 helical membrane-spanning segments follow: residues 125-162 (FSGW…ICTG) and 208-231 (VNYF…VKAF). The Selectivity filter part_1 signature appears at 237–241 (GSGIP). Position 238 (S238) interacts with chloride. The helical intramembrane region spans 240-247 (IPEIKTIL). The next 2 helical transmembrane spans lie at 256–275 (LGKW…VSSG) and 281–300 (EGPL…HCFN). The Selectivity filter part_2 signature appears at 279–283 (GKEGP). 2 intramembrane regions (helical) span residues 312–324 (VLSA…VSVA) and 328–336 (PIGGVLFSL). The next 5 helical transmembrane spans lie at 348–366 (LWRS…RSIN), 389–414 (LVPF…IAWC), 422–442 (LGKY…ILAF), 498–518 (MWQL…TFGM), and 523–542 (GLFI…LGVG). A Selectivity filter part_3 motif is present at residues 523–527 (GLFIP). Chloride is bound at residue F525. The segment at residues 570–584 (GLYAMVGAAACLGGV) is an intramembrane region (helical). An intramembrane region (note=Loop between two helices) is located at residues 585-587 (TRM). Positions 588–599 (TVSLVVIMFELT) form an intramembrane region, helical. Residues 600-604 (GGLEY) constitute an intramembrane region (note=Loop between two helices). The chain crosses the membrane as a helical span at residues 605 to 622 (IVPLMAAAMTSKWVADAL). The Cytoplasmic portion of the chain corresponds to 623-816 (GREGIYDAHI…NQDPESILFN (194 aa)). Y628 lines the chloride pocket. 2 consecutive CBS domains span residues 656–720 (MKPR…ARKK) and 752–811 (ILDL…QDPE). Residues T666, 687 to 689 (YSG), and 794 to 797 (TKKD) each bind ATP.

This sequence belongs to the chloride channel (TC 2.A.49) family. ClC-5/CLCN5 subfamily. As to quaternary structure, interacts with NEDD4 and NEDD4L. In terms of processing, ubiquitinated by NEDD4L in the presence of albumin; which promotes endocytosis and proteasomal degradation. As to expression, kidney specific.

The protein resides in the golgi apparatus membrane. It is found in the endosome membrane. The protein localises to the cell membrane. It carries out the reaction 2 chloride(in) + H(+)(out) = 2 chloride(out) + H(+)(in). Functionally, proton-coupled chloride transporter. Functions as antiport system and exchanges chloride ions against protons. Important for normal acidification of the endosome lumen. May play an important role in renal tubular function. The CLC channel family contains both chloride channels and proton-coupled anion transporters that exchange chloride or another anion for protons. The absence of conserved gating glutamate residues is typical for family members that function as channels. The polypeptide is H(+)/Cl(-) exchange transporter 5 (Clcn5) (Rattus norvegicus (Rat)).